Reading from the N-terminus, the 142-residue chain is Large-conductance mechanosensitive channel (142 aa).

3 consecutive transmembrane segments (helical) span residues 14-34 (VVDL…VNSL), 38-58 (VIMP…YYIP), and 82-102 (GQFL…FMVI).

It belongs to the MscL family. Homopentamer.

The protein resides in the cell inner membrane. Its function is as follows. Channel that opens in response to stretch forces in the membrane lipid bilayer. May participate in the regulation of osmotic pressure changes within the cell. This is Large-conductance mechanosensitive channel from Methylorubrum populi (strain ATCC BAA-705 / NCIMB 13946 / BJ001) (Methylobacterium populi).